The sequence spans 203 residues: Small ribosomal subunit protein uS4 (203 aa).

The S4 RNA-binding domain maps to 93–156 (QRLDNVVYRL…MKVPAILEAV (64 aa)).

This sequence belongs to the universal ribosomal protein uS4 family. In terms of assembly, part of the 30S ribosomal subunit. Contacts protein S5. The interaction surface between S4 and S5 is involved in control of translational fidelity.

In terms of biological role, one of the primary rRNA binding proteins, it binds directly to 16S rRNA where it nucleates assembly of the body of the 30S subunit. Its function is as follows. With S5 and S12 plays an important role in translational accuracy. The protein is Small ribosomal subunit protein uS4 of Lactococcus lactis subsp. cremoris (strain MG1363).